The primary structure comprises 281 residues: LC-AMP precursor 3 (281 aa).

Positions 1–19 (MKYTIIPFLLLVALTCATA) are cleaved as a signal peptide. Positions 20-56 (RSIDGSEKEVQEIREETPSSNEDVPFSLSANEDEEAR) are excised as a propeptide. Leucine amide is present on leucine 74. Residues 75 to 89 (GREESLSANEDEEAR) constitute a propeptide that is removed on maturation. A Serine amide modification is found at serine 114. A propeptide spanning residues 115–129 (GREESFSANEDEEER) is cleaved from the precursor. At leucine 147 the chain carries Leucine amide. Positions 148 to 162 (GREESISANEDEETR) are excised as a propeptide. Leucine 180 carries the leucine amide modification. Positions 181-195 (GREESLSAIEDEEAR) are excised as a propeptide. A Leucine amide modification is found at leucine 213. The propeptide occupies 214–228 (GREESLSANEDEEAR). Leucine 246 bears the Leucine amide mark. Positions 247-261 (GREESLSANEDEEAR) are excised as a propeptide. Leucine 279 carries the leucine amide modification.

Expressed by the venom gland.

Its subcellular location is the secreted. Antimicrobial peptide that acts by influencing bacterial cell membrane permeability at low concentrations and by directly disrupting structure-function at high concentrations. Shows activity against Gram-negative bacteria (S.typhimurium CGMCC 1.1174 (MIC=2.5 uM), E.coli CCTCC AB 2018675 (MIC=5 uM), S.dysenteriae CGMCC 1.1869 (MIC=2.5 uM), P.aeruginosa CGMCC 1.596 (MIC 5-10 uM), K.pneumoniae (MIC=10 uM), A.baumannii (MIC=5-10 uM)), and Gram-positive bacteria (S.aureus CMCC 26003 or MRSA ATCC 43300 (MIC=5 uM), and E.faecium (MIC=2.5-5 uM)). Inhibits biofilm formation of E.coli and S.aureus in a dose-dependent manner and disrupts established biofilms. Demonstrates minimal bacterial resistance, excellent stability, negligible mammalian cell toxicity, low hemolytic activity, and appropriate selectivity for both normal and tumor cells. When combined with traditional antibiotics, exhibits additive or synergistic therapeutic effects. In vivo, in a neutropenic mouse thigh infection model, exhibits a therapeutic effect in inhibiting bacterial proliferation. This chain is LC-AMP precursor 3, found in Lycosa coelestis (Wolf spider).